The chain runs to 574 residues: Galactose transporter (574 aa).

The disordered stretch occupies residues 1–57; that stretch reads MAVEENNMPVVSQQPQAGEDVISSLSKDSHLSAQSQKYSNDELKAGESGSEGSQSVP. The Cytoplasmic segment spans residues 1–70; it reads MAVEENNMPV…PKKPMSEYVT (70 aa). Positions 23–38 are enriched in polar residues; the sequence is SSLSKDSHLSAQSQKY. Ser-32, Ser-35, Ser-39, Ser-48, Ser-50, Ser-53, and Ser-55 each carry phosphoserine. The helical transmembrane segment at 71-91 threads the bilayer; that stretch reads VSLLCLCVAFGGFMFGWDTGT. Over 92–121 the chain is Extracellular; the sequence is ISGFVVQTDFLRRFGMKHKDGTHYLSNVRT. Residues 122-142 form a helical membrane-spanning segment; the sequence is GLIVAIFNIGCAFGGIILSKG. Over 143 to 149 the chain is Cytoplasmic; the sequence is GDMYGRK. A helical transmembrane segment spans residues 150-170; that stretch reads KGLSIVVSVYIVGIIIQIASI. At 171-175 the chain is on the extracellular side; it reads NKWYQ. The helical transmembrane segment at 176–196 threads the bilayer; the sequence is YFIGRIISGLGVGGIAVLCPM. The Cytoplasmic segment spans residues 197–207; that stretch reads LISEIAPKHLR. A helical transmembrane segment spans residues 208–228; sequence GTLVSCYQLMITAGIFLGYCT. Residues 229-242 are Extracellular-facing; sequence NYGTKSYSNSVQWR. Residues 243–263 form a helical membrane-spanning segment; the sequence is VPLGLCFAWSLFMIGALTLVP. Residues 264-342 lie on the Cytoplasmic side of the membrane; sequence ESPRYLCEVN…MGVFVQMFQQ (79 aa). The chain crosses the membrane as a helical span at residues 343 to 362; that stretch reads LTGNNYFFYYGTVIFKSVGL. The Extracellular segment spans residues 363–366; it reads DDSF. A helical membrane pass occupies residues 367-387; it reads ETSIVIGVVNFASTFFSLWTV. Residues 388 to 394 lie on the Cytoplasmic side of the membrane; the sequence is ENLGHRK. Residues 395-415 form a helical membrane-spanning segment; it reads CLLLGAATMMACMVIYASVGV. Over 416-435 the chain is Extracellular; sequence TRLYPHGKSQPSSKGAGNCM. The helical transmembrane segment at 436-456 threads the bilayer; the sequence is IVFTCFYIFCYATTWAPVAWV. Residues 457 to 472 are Cytoplasmic-facing; sequence ITAESFPLRVKSKCMA. The chain crosses the membrane as a helical span at residues 473–493; that stretch reads LASASNWVWGFLIAFFTPFIT. At 494–499 the chain is on the extracellular side; sequence SAINFY. Residues 500 to 520 form a helical membrane-spanning segment; it reads YGYVFMGCLVAMFFYVFFFVP. Residues 521–574 lie on the Cytoplasmic side of the membrane; it reads ETKGLSLEEIQELWEEGVLPWKSEGWIPSSRRGNNYDLEDLQHDDKPWYKAMLE.

It belongs to the major facilitator superfamily. Sugar transporter (TC 2.A.1.1) family.

It localises to the membrane. Its function is as follows. GAL2 is a facilitated diffusion transporter required for both the high-affinity galactokinase-dependent and low-affinity galactokinase-independent galactose transport processes. The chain is Galactose transporter (GAL2) from Saccharomyces cerevisiae (strain ATCC 204508 / S288c) (Baker's yeast).